The chain runs to 323 residues: Syntaxin-42 (323 aa).

The Cytoplasmic segment spans residues 1-302 (MATRNRTTVY…QREGAMVKCA (302 aa)). Positions 227–289 (QHVSAERERE…EEGYKQLQKA (63 aa)) constitute a t-SNARE coiled-coil homology domain. Residues 303–323 (TILLVLCLIMIVLLILKNILF) form a helical; Anchor for type IV membrane protein membrane-spanning segment.

Belongs to the syntaxin family. Interacts with VTI12 and SYP61 to form a t-SNARE complex and with VPS45. As to expression, expressed at low levels in roots, stems, flowers and leaves.

The protein localises to the golgi apparatus. It localises to the trans-Golgi network membrane. Contributes to the regulation of secretory and vacuolar transport pathways in the post-Golgi network, and to the maintenance of the Golgi apparatus and trans-Golgi network (TGN) morphologies. Vesicle trafficking protein that functions in the secretory pathway and mediates liposome fusion. Required for extracellular resistance responses to a fungal pathogen. Also involved in the protection of chloroplasts from salicylic acid-dependent biotic stress. The protein is Syntaxin-42 of Arabidopsis thaliana (Mouse-ear cress).